The sequence spans 179 residues: Replication restart protein DnaT (179 aa).

The tract at residues 1–83 (MSSRILTSHF…FEEPAAAPVA (83 aa)) is required for trimerization and to bind PriB. Residues 84 to 179 (VPMGKFAMYA…DSHIPRGFRG (96 aa)) are binds ssDNA. Residues 151–179 (SRASNGGQPKRDVNSVSEPDSHIPRGFRG) form a disordered region. Residues 159-173 (PKRDVNSVSEPDSHI) are compositionally biased toward basic and acidic residues.

This sequence belongs to the DnaT family. Homotrimer. Interacts with PriB. Interacts with PriC. Component of the replication restart primosome. Primosome assembly occurs via a 'hand-off' mechanism. PriA binds to replication forks, subsequently PriB then DnaT bind; DnaT then displaces ssDNA to generate the helicase loading substrate.

Involved in the restart of stalled replication forks, which reloads the replicative helicase on sites other than the origin of replication. Can function in multiple replication restart pathways. Displaces ssDNA from a PriB-ssDNA complex. Probably forms a spiral filament on ssDNA. Functionally, binds single-stranded (ss)DNA. The minimal binding site is about 26 +/- 2 nucleotides (nt) per trimer. Two DNA-protein complexes are seen with 55 nt-long ssDNA. The polypeptide is Replication restart protein DnaT (Klebsiella pneumoniae subsp. pneumoniae (strain ATCC 700721 / MGH 78578)).